The primary structure comprises 430 residues: Glutamate-1-semialdehyde 2,1-aminomutase (430 aa).

An N6-(pyridoxal phosphate)lysine modification is found at Lys265.

This sequence belongs to the class-III pyridoxal-phosphate-dependent aminotransferase family. HemL subfamily. Homodimer. Pyridoxal 5'-phosphate is required as a cofactor.

It is found in the cytoplasm. It carries out the reaction (S)-4-amino-5-oxopentanoate = 5-aminolevulinate. Its pathway is porphyrin-containing compound metabolism; protoporphyrin-IX biosynthesis; 5-aminolevulinate from L-glutamyl-tRNA(Glu): step 2/2. This chain is Glutamate-1-semialdehyde 2,1-aminomutase, found in Shewanella baltica (strain OS195).